Reading from the N-terminus, the 338-residue chain is Eukaryotic translation initiation factor 3 subunit H (338 aa).

An MPN domain is found at Val-22–Ala-154.

It belongs to the eIF-3 subunit H family. As to quaternary structure, component of the eukaryotic translation initiation factor 3 (eIF-3) complex. The eIF-3 complex interacts with pix. Interacts with mxt.

The protein resides in the cytoplasm. Component of the eukaryotic translation initiation factor 3 (eIF-3) complex, which is involved in protein synthesis of a specialized repertoire of mRNAs and, together with other initiation factors, stimulates binding of mRNA and methionyl-tRNAi to the 40S ribosome. The eIF-3 complex specifically targets and initiates translation of a subset of mRNAs involved in cell proliferation. This chain is Eukaryotic translation initiation factor 3 subunit H, found in Drosophila yakuba (Fruit fly).